The primary structure comprises 279 residues: Prepilin leader peptidase/N-methyltransferase (279 aa).

The Periplasmic segment spans residues 1–16 (MDDLREFAQLFPAWWF). A helical transmembrane segment spans residues 17–35 (GALGVLGLIVGSFLNVVIY). Over 36–104 (RLPIMLERRW…RSRCCHQSVS (69 aa)) the chain is Cytoplasmic. The helical transmembrane segment at 105 to 123 (VQYPLVEVITMLAFLAAGL) threads the bilayer. The Periplasmic segment spans residues 124-130 (LWLPGMA). The chain crosses the membrane as a helical span at residues 131 to 149 (LWGALILLSFLLVLTVIDI). The Cytoplasmic portion of the chain corresponds to 150–163 (KTLLLPDELTLSLL). A helical membrane pass occupies residues 164 to 182 (WMGLLFNLSGTFVSLNDAV). The Periplasmic segment spans residues 183–185 (VGA). A helical transmembrane segment spans residues 186 to 204 (MAGYLSLWLLYWAFKYATG). Residues 205 to 214 (KEALGYGDFK) lie on the Cytoplasmic side of the membrane. The helical transmembrane segment at 215–233 (LLAALGAWLGWQALPNLVL) threads the bilayer. At 234 to 236 (VAA) the chain is on the periplasmic side. The helical transmembrane segment at 237–254 (LSGLVVTLIWRGLRKEDT) threads the bilayer. At 255 to 257 (AKP) the chain is on the cytoplasmic side. The helical transmembrane segment at 258 to 276 (LAFGPWLAIGGVFGMIMNG) threads the bilayer. The Periplasmic segment spans residues 277-279 (FNL).

This sequence belongs to the peptidase A24 family.

It is found in the cell inner membrane. It carries out the reaction Typically cleaves a -Gly-|-Phe- bond to release an N-terminal, basic peptide of 5-8 residues from type IV prepilin, and then N-methylates the new N-terminal amino group, the methyl donor being S-adenosyl-L-methionine.. Plays a role in type II pseudopili formation by proteolytically removing the leader sequence from substrate proteins and subsequently monomethylating the alpha-amino group of the newly exposed N-terminal phenylalanine. Substrates include proteins required for biogenesis of the type II general secretory apparatus. The protein is Prepilin leader peptidase/N-methyltransferase (outO) of Pectobacterium carotovorum subsp. carotovorum (Erwinia carotovora subsp. carotovora).